Reading from the N-terminus, the 327-residue chain is tRNA N6-adenosine threonylcarbamoyltransferase (327 aa).

The Fe cation site is built by His-109 and His-113. Substrate is bound by residues 132–136, Asp-165, Gly-178, Asp-182, and Asn-268; that span reads MVSGG. Asp-296 is a binding site for Fe cation.

Belongs to the KAE1 / TsaD family. Requires Fe(2+) as cofactor.

Its subcellular location is the cytoplasm. The enzyme catalyses L-threonylcarbamoyladenylate + adenosine(37) in tRNA = N(6)-L-threonylcarbamoyladenosine(37) in tRNA + AMP + H(+). In terms of biological role, required for the formation of a threonylcarbamoyl group on adenosine at position 37 (t(6)A37) in tRNAs that read codons beginning with adenine. Is involved in the transfer of the threonylcarbamoyl moiety of threonylcarbamoyl-AMP (TC-AMP) to the N6 group of A37, together with TsaE and TsaB. TsaD likely plays a direct catalytic role in this reaction. This Thermotoga petrophila (strain ATCC BAA-488 / DSM 13995 / JCM 10881 / RKU-1) protein is tRNA N6-adenosine threonylcarbamoyltransferase.